The sequence spans 92 residues: Acylphosphatase (92 aa).

Positions 5–92 constitute an Acylphosphatase-like domain; sequence RVKVKVNGRV…GVFERFEVRF (88 aa). Active-site residues include Arg-20 and Asn-38.

Belongs to the acylphosphatase family.

The catalysed reaction is an acyl phosphate + H2O = a carboxylate + phosphate + H(+). The polypeptide is Acylphosphatase (acyP) (Syntrophotalea carbinolica (strain DSM 2380 / NBRC 103641 / GraBd1) (Pelobacter carbinolicus)).